A 308-amino-acid chain; its full sequence is uncharacterized protein (308 aa).

Positions 15–81 constitute an S4 RNA-binding domain; that stretch reads MRVDTGLARL…QNTPIDIEGM (67 aa). D139 is an active-site residue.

It belongs to the pseudouridine synthase RluA family.

It carries out the reaction a uridine in RNA = a pseudouridine in RNA. This is an uncharacterized protein from Mycobacterium tuberculosis (strain CDC 1551 / Oshkosh).